Here is a 308-residue protein sequence, read N- to C-terminus: Ornithine carbamoyltransferase (308 aa).

Residues arginine 103 and 130–133 each bind carbamoyl phosphate; that span reads HPAQ. L-ornithine contacts are provided by residues asparagine 162, aspartate 221, and 225 to 226; that span reads SM. Residues 261 to 262 and arginine 289 contribute to the carbamoyl phosphate site; that span reads CL.

It belongs to the aspartate/ornithine carbamoyltransferase superfamily. OTCase family.

It localises to the cytoplasm. It carries out the reaction carbamoyl phosphate + L-ornithine = L-citrulline + phosphate + H(+). Its pathway is amino-acid biosynthesis; L-arginine biosynthesis; L-arginine from L-ornithine and carbamoyl phosphate: step 1/3. In terms of biological role, reversibly catalyzes the transfer of the carbamoyl group from carbamoyl phosphate (CP) to the N(epsilon) atom of ornithine (ORN) to produce L-citrulline. The chain is Ornithine carbamoyltransferase from Deinococcus radiodurans (strain ATCC 13939 / DSM 20539 / JCM 16871 / CCUG 27074 / LMG 4051 / NBRC 15346 / NCIMB 9279 / VKM B-1422 / R1).